Reading from the N-terminus, the 200-residue chain is Imidazole glycerol phosphate synthase subunit HisH (200 aa).

Residues 3–200 enclose the Glutamine amidotransferase type-1 domain; it reads EVALIDAGGA…LRNFLEMDAA (198 aa). Catalysis depends on Cys78, which acts as the Nucleophile. Catalysis depends on residues His179 and Glu181.

Heterodimer of HisH and HisF.

The protein localises to the cytoplasm. It carries out the reaction 5-[(5-phospho-1-deoxy-D-ribulos-1-ylimino)methylamino]-1-(5-phospho-beta-D-ribosyl)imidazole-4-carboxamide + L-glutamine = D-erythro-1-(imidazol-4-yl)glycerol 3-phosphate + 5-amino-1-(5-phospho-beta-D-ribosyl)imidazole-4-carboxamide + L-glutamate + H(+). The catalysed reaction is L-glutamine + H2O = L-glutamate + NH4(+). It functions in the pathway amino-acid biosynthesis; L-histidine biosynthesis; L-histidine from 5-phospho-alpha-D-ribose 1-diphosphate: step 5/9. Functionally, IGPS catalyzes the conversion of PRFAR and glutamine to IGP, AICAR and glutamate. The HisH subunit catalyzes the hydrolysis of glutamine to glutamate and ammonia as part of the synthesis of IGP and AICAR. The resulting ammonia molecule is channeled to the active site of HisF. The polypeptide is Imidazole glycerol phosphate synthase subunit HisH (Xylella fastidiosa (strain Temecula1 / ATCC 700964)).